A 397-amino-acid polypeptide reads, in one-letter code: Elongation factor Tu (397 aa).

The region spanning 10–207 (KPHLNIGTIG…AVDAYIPEPE (198 aa)) is the tr-type G domain. A G1 region spans residues 19–26 (GHVDHGKT). 19 to 26 (GHVDHGKT) provides a ligand contact to GTP. T26 is a binding site for Mg(2+). The interval 60-64 (GVTIN) is G2. A G3 region spans residues 81 to 84 (DCPG). GTP contacts are provided by residues 81–85 (DCPGH) and 136–139 (NKVD). The G4 stretch occupies residues 136 to 139 (NKVD). The segment at 174–176 (SAL) is G5.

It belongs to the TRAFAC class translation factor GTPase superfamily. Classic translation factor GTPase family. EF-Tu/EF-1A subfamily. As to quaternary structure, monomer.

It is found in the cytoplasm. It carries out the reaction GTP + H2O = GDP + phosphate + H(+). Functionally, GTP hydrolase that promotes the GTP-dependent binding of aminoacyl-tRNA to the A-site of ribosomes during protein biosynthesis. The chain is Elongation factor Tu from Syntrophus aciditrophicus (strain SB).